The sequence spans 474 residues: Fumarate hydratase class II (474 aa).

Residues 104 to 106 (SGT), 128 to 131 (HPND), 138 to 140 (SSN), and Thr186 each bind substrate. Residue His187 is the Proton donor/acceptor of the active site. The active site involves Ser318. Residues Ser319 and 324 to 326 (KVN) each bind substrate.

It belongs to the class-II fumarase/aspartase family. Fumarase subfamily. In terms of assembly, homotetramer.

The protein resides in the cytoplasm. The enzyme catalyses (S)-malate = fumarate + H2O. It functions in the pathway carbohydrate metabolism; tricarboxylic acid cycle; (S)-malate from fumarate: step 1/1. Functionally, involved in the TCA cycle. Catalyzes the stereospecific interconversion of fumarate to L-malate. The protein is Fumarate hydratase class II of Mycobacterium bovis (strain ATCC BAA-935 / AF2122/97).